We begin with the raw amino-acid sequence, 660 residues long: Acetyl-coenzyme A synthetase (660 aa).

Residues 197–200 and Thr-317 each bind CoA; that span reads RGGK. ATP is bound by residues 397 to 399, 421 to 426, Asp-512, and Arg-528; these read GEP and DTWWQT. Position 536 (Ser-536) interacts with CoA. Residue Arg-539 coordinates ATP. Mg(2+) contacts are provided by Val-550, His-552, and Val-555. Residue Lys-625 is modified to N6-acetyllysine.

Belongs to the ATP-dependent AMP-binding enzyme family. It depends on Mg(2+) as a cofactor. In terms of processing, acetylated. Deacetylation by the SIR2-homolog deacetylase activates the enzyme.

The enzyme catalyses acetate + ATP + CoA = acetyl-CoA + AMP + diphosphate. Functionally, catalyzes the conversion of acetate into acetyl-CoA (AcCoA), an essential intermediate at the junction of anabolic and catabolic pathways. AcsA undergoes a two-step reaction. In the first half reaction, AcsA combines acetate with ATP to form acetyl-adenylate (AcAMP) intermediate. In the second half reaction, it can then transfer the acetyl group from AcAMP to the sulfhydryl group of CoA, forming the product AcCoA. This Burkholderia lata (strain ATCC 17760 / DSM 23089 / LMG 22485 / NCIMB 9086 / R18194 / 383) protein is Acetyl-coenzyme A synthetase.